A 60-amino-acid chain; its full sequence is Large ribosomal subunit protein uL30 (60 aa).

It belongs to the universal ribosomal protein uL30 family. As to quaternary structure, part of the 50S ribosomal subunit.

The protein is Large ribosomal subunit protein uL30 of Finegoldia magna (strain ATCC 29328 / DSM 20472 / WAL 2508) (Peptostreptococcus magnus).